A 1007-amino-acid polypeptide reads, in one-letter code: Aldehyde reductase lnbA (1007 aa).

Positions 35–428 (QVRQSPSSIA…GRVDHQIKVR (394 aa)) are adenylation (A) domain. The region spanning 540-617 (TLCQDTQTVL…ALASIIDHAK (78 aa)) is the Carrier domain. At Ser577 the chain carries O-(pantetheine 4'-phosphoryl)serine. Residues 659-998 (IFITGATGFV…PTLDCSLLKK (340 aa)) form a short-chain dehydrogenase/reductase (R) domain region.

It belongs to the NRP synthetase family.

The enzyme catalyses L-tyrosinal + AMP + diphosphate + NADP(+) = L-tyrosine + ATP + NADPH + H(+). It participates in secondary metabolite biosynthesis. Non-canonical nonribosomal peptide synthetase; part of the lnb gene cluster that mediates the biosynthesis of diastereomeric piperazines. Lna and lnb clusters encode sets of enzymes that produce overlapping sets of previously undescribed metabolites such as piperazinomycin-like metabolites or morpholine. The lna and lnb biosynthetic pathways appear to be part of a signaling network that controls the formation of sclerotia, a resilient overwintering structure. One primary function of the non-canonical nonribosomal peptide synthetases lnaA and lnbA consists in the reduction of L-tyrosine. The presence in the clusters of tailoring enzymes such as the oxidoreductases lnaB, lnbB, lnaE or lnbE, as well as of the cytochrome P450 monooxygenases lnaC, lnaD, or lnbC, might explain formation of various diastereomeric piperazines. This Aspergillus flavus (strain ATCC 200026 / FGSC A1120 / IAM 13836 / NRRL 3357 / JCM 12722 / SRRC 167) protein is Aldehyde reductase lnbA.